The chain runs to 447 residues: Probable protein phosphatase 2C 71 (447 aa).

Residues 33–279 (SYGYASSAGK…DNITCVVVRF (247 aa)) form the PPM-type phosphatase domain. Mn(2+)-binding residues include D69, G70, D231, and D270. The segment covering 284–297 (SANNNGSSSSEEAN) has biased composition (low complexity). The tract at residues 284–447 (SANNNGSSSS…ARKTTPSIFN (164 aa)) is disordered. Positions 305 to 331 (NDSDHKISAKETNQDHTTVNKDLDRNT) are enriched in basic and acidic residues. Composition is skewed to polar residues over residues 346–374 (ADNS…TGEK) and 392–423 (KVPN…GSTG). Residues 424–438 (ERNRKPIKVHSDSAA) show a composition bias toward basic and acidic residues.

Belongs to the PP2C family. It depends on Mg(2+) as a cofactor. The cofactor is Mn(2+).

The catalysed reaction is O-phospho-L-seryl-[protein] + H2O = L-seryl-[protein] + phosphate. The enzyme catalyses O-phospho-L-threonyl-[protein] + H2O = L-threonyl-[protein] + phosphate. This chain is Probable protein phosphatase 2C 71, found in Arabidopsis thaliana (Mouse-ear cress).